The sequence spans 431 residues: ATP-dependent RNA helicase DBP8 (431 aa).

Residues 2–30 carry the Q motif motif; sequence ADFKSLGLSKWLTESLRAMKITQPTAIQK. Residues 33–209 form the Helicase ATP-binding domain; sequence IPKILEGRDC…NAPVQKGKPP (177 aa). Position 46–53 (46–53) interacts with ATP; sequence AKTGSGKT. A DEAD box motif is present at residues 155 to 158; that stretch reads DEAD. One can recognise a Helicase C-terminal domain in the interval 242 to 389; it reads YLYQLLTCEE…TNKVHDTAVI (148 aa). Positions 404–431 are disordered; the sequence is LMAMQKENFGERKRQQKKKQNDGKSLRS. The segment covering 411–431 has biased composition (basic and acidic residues); it reads NFGERKRQQKKKQNDGKSLRS.

This sequence belongs to the DEAD box helicase family. DDX49/DBP8 subfamily. Interacts with ESF2.

It is found in the nucleus. It localises to the nucleolus. It catalyses the reaction ATP + H2O = ADP + phosphate + H(+). Functionally, ATP-binding RNA helicase involved in 40S ribosomal subunit biogenesis and is required for the normal formation of 18S rRNAs through pre-rRNA processing at A0, A1 and A2 sites. Required for vegetative growth. This Saccharomyces cerevisiae (strain YJM789) (Baker's yeast) protein is ATP-dependent RNA helicase DBP8 (DBP8).